A 375-amino-acid chain; its full sequence is Guanine nucleotide-binding protein subunit beta (375 aa).

WD repeat units lie at residues 63–93, 105–135, 154–185, 202–233, 246–276, 293–323, and 339–369; these read GHTG…IVWN, LPCA…SIYN, GHKG…VLWD, GHTA…RLWD, GHEG…RLFD, GDIP…YVWD, and SHEG…KIWA.

The protein belongs to the WD repeat G protein beta family. As to quaternary structure, g proteins are composed of 3 units, alpha, beta and gamma.

Its function is as follows. Guanine nucleotide-binding proteins (G proteins) are involved as a modulator or transducer in various transmembrane signaling systems. The beta and gamma chains are required for the GTPase activity, for replacement of GDP by GTP, and for G protein-effector interaction. The polypeptide is Guanine nucleotide-binding protein subunit beta (Nicotiana tabacum (Common tobacco)).